Reading from the N-terminus, the 281-residue chain is Elongation factor 1-delta (281 aa).

Residue Ala2 is modified to N-acetylalanine. Lys17 bears the N6-acetyllysine mark. Phosphoserine is present on residues Ser37, Glu40, Ser44, and Ser60. Phosphothreonine is present on Thr73. The tract at residues 80-115 (LVVRIASLEVENQSLRGVVQELQQAISKLEARLNVL) is leucine-zipper. Phosphoserine occurs at positions 86, 91, 94, and 106. Position 107 is an N6-acetyllysine (Lys107). At Lys117 the chain carries N6-acetyllysine; alternate. Residue Lys117 is modified to N6-succinyllysine; alternate. The interval 118-172 (SSPGHRATAPQTQHVSPMRQVEPPAKKPATPAEDDEDDDIDLFGSDNEEEDKEAA) is disordered. Ser119 carries the phosphoserine modification. Thr129 bears the Phosphothreonine mark. A Phosphoserine modification is found at Ser133. The residue at position 147 (Thr147) is a Phosphothreonine. Residues 149–169 (AEDDEDDDIDLFGSDNEEEDK) show a composition bias toward acidic residues. Ser162 is modified (phosphoserine; by CK2). Positions 173 to 281 (QLREERLRQY…SVDIAAFNKI (109 aa)) are catalytic (GEF).

The protein belongs to the EF-1-beta/EF-1-delta family. EF-1 is composed of 4 subunits: alpha, beta, delta isoform 1, and gamma. Isoform 2 interacts with HSF1 and NFE2L2. As to expression, isoform 2 is specifically expressed in brain, cerebellum and testis.

The protein resides in the nucleus. EF-1-beta and EF-1-delta stimulate the exchange of GDP bound to EF-1-alpha to GTP, regenerating EF-1-alpha for another round of transfer of aminoacyl-tRNAs to the ribosome. In terms of biological role, regulates induction of heat-shock-responsive genes through association with heat shock transcription factors and direct DNA-binding at heat shock promoter elements (HSE). The chain is Elongation factor 1-delta (EEF1D) from Homo sapiens (Human).